Reading from the N-terminus, the 488-residue chain is MWENKFAKESLTFDDVLLIPAASDVLPSDVDLSVKLSDKIKLNIPVISAGMDTVTESKMAIAMARQGGLGVIHKNMGVEEQADEVQKVKRSENGVISNPFFLTPEESVYEAEALMGKYRISGVPIVDNQEDRKLIGILTNRDLRFIEDFSIKISDVMTKDNLITAPVGTTLDEAEAILQKHKIEKLPLVENGRLEGLITIKDIEKVLEFPYAAKDEHGRLLAAAAIGTSKDTEIRAQKLVEAGVDALIIDTAHGHSKGVINQVKHIKETYPEITVVAGNVATAEATRALFEAGADVVKVGIGPGSICTTRVVAGVGVPQITAVYDCATEARKHGKAIIADGGIKFSGDIIKALAAGGHAVMLGSLLAGTEESPGATEVFQGRQYKVYRGMGSLGAMEKGSNDRYFQEDKTPRKFVPEGIEGRTAYKGPLQDTIYQLMGGVRAGMGYTGSENLKKLREEAQFTRMGPAGLAESHPHNVQITKESPNYSF.

2 CBS domains span residues 95-153 (VISN…SIKI) and 157-216 (MTKD…AKDE). NAD(+) contacts are provided by residues Asp250 and 300-302 (GIG). Residues Gly302 and Gly304 each coordinate K(+). An IMP-binding site is contributed by Ser305. K(+) is bound at residue Cys307. Cys307 serves as the catalytic Thioimidate intermediate. Residues 340–342 (DGG), 363–364 (GS), and 387–391 (YRGMG) each bind IMP. Arg403 serves as the catalytic Proton acceptor. Glu417 contacts IMP. The disordered stretch occupies residues 467-488 (AGLAESHPHNVQITKESPNYSF). Glu471, Ser472, and His473 together coordinate K(+). A compositionally biased stretch (polar residues) spans 475 to 488 (HNVQITKESPNYSF).

The protein belongs to the IMPDH/GMPR family. In terms of assembly, homotetramer. The cofactor is K(+).

The catalysed reaction is IMP + NAD(+) + H2O = XMP + NADH + H(+). Its pathway is purine metabolism; XMP biosynthesis via de novo pathway; XMP from IMP: step 1/1. With respect to regulation, mycophenolic acid (MPA) is a non-competitive inhibitor that prevents formation of the closed enzyme conformation by binding to the same site as the amobile flap. In contrast, mizoribine monophosphate (MZP) is a competitive inhibitor that induces the closed conformation. MPA is a potent inhibitor of mammalian IMPDHs but a poor inhibitor of the bacterial enzymes. MZP is a more potent inhibitor of bacterial IMPDH. Its function is as follows. Catalyzes the conversion of inosine 5'-phosphate (IMP) to xanthosine 5'-phosphate (XMP), the first committed and rate-limiting step in the de novo synthesis of guanine nucleotides, and therefore plays an important role in the regulation of cell growth. The protein is Inosine-5'-monophosphate dehydrogenase of Staphylococcus epidermidis (strain ATCC 35984 / DSM 28319 / BCRC 17069 / CCUG 31568 / BM 3577 / RP62A).